Consider the following 940-residue polypeptide: Serine/threonine-protein phosphatase 1 regulatory subunit 10 (940 aa).

Residues 1-348 (MGSGPIDPKE…EPAPPSEAME (348 aa)) form an interaction with TOX4 region. In terms of domain architecture, TFIIS N-terminal spans 73–147 (KLLNNWLTYS…SDWMAVIRSQ (75 aa)). Disordered stretches follow at residues 147–210 (QSST…KFRS), 248–270 (NVAAPGDATPPAEKKYKPLNTTP), 304–400 (KIKK…KSVT), and 534–557 (VETLEPGGSGGSPDGAGGSKLPPV). 2 stretches are compositionally biased toward basic and acidic residues: residues 153–166 (AEKDKKKRKDEGKS) and 174–196 (PLTEVKAETRAEEAPEKKREKPK). Lys179 participates in a covalent cross-link: Glycyl lysine isopeptide (Lys-Gly) (interchain with G-Cter in SUMO2). At Thr256 the chain carries Phosphothreonine. Residue Lys262 forms a Glycyl lysine isopeptide (Lys-Gly) (interchain with G-Cter in SUMO2) linkage. Ser313 carries the phosphoserine modification. Positions 325–336 (KTSTEPSTAKPS) are enriched in low complexity. Positions 357-433 (PPVEVPELMD…NKIKDFGEAA (77 aa)) are necessary for interaction with PPP1CA. At Ser382 the chain carries Phosphoserine. Residues 393–408 (GRKRKSVTWPEEGKLR) are necessary for interaction with PPP1CC. Positions 394-423 (RKRKSVTWPEEGKLREYFYFELDETERVNV) match the PP1-binding motif motif. Ser398 carries the phosphoserine; by PKA modification. The interval 418 to 619 (TERVNVNKIK…IKQMLVPHGL (202 aa)) is interaction with WDR82. Positions 540-551 (GGSGGSPDGAGG) are enriched in gly residues. A phosphoserine mark is found at Ser545 and Ser591. The disordered stretch occupies residues 617 to 905 (HGLLGPGPIA…HDGGHSHGGD (289 aa)). The segment covering 644–655 (PPGPGGPMPGPH) has biased composition (pro residues). Arg665 bears the Omega-N-methylarginine mark. Low complexity predominate over residues 676-690 (GDPFWDGPGDPMRGG). 2 positions are modified to omega-N-methylarginine: Arg693 and Arg738. Composition is skewed to gly residues over residues 725–763 (ARGGRSGGGPPNGRGGPGGGMVGGGGHRPHEGPGGGMGN) and 789–844 (GSMG…GSGG). 2 stretches are compositionally biased toward basic and acidic residues: residues 861 to 886 (PHDVPGHRGHDHRGPPPHEHRGHDGP) and 894 to 903 (RGHDGGHSHG). The C3H1-type zinc-finger motif lies at 906–934 (MSNRPVCRHFMMKGNCRYENNCAFYHPGV).

As to quaternary structure, component of the PNUTS-PP1 complex (also named PTW/PP1 complex), composed of PPP1R10/PNUTS, TOX4, WDR82, and PPP1CA (or PPP1CB or PPP1CC). In terms of processing, phosphorylated on Ser-398 by PKA within the region necessary for interaction with PPP1CA.

It localises to the nucleus. It is found in the chromosome. Its function is as follows. Substrate-recognition component of the PNUTS-PP1 protein phosphatase complex, a protein phosphatase 1 (PP1) complex that promotes RNA polymerase II transcription pause-release, allowing transcription elongation. Promoter-proximal pausing by RNA polymerase II is a transcription halt following transcription initiation but prior to elongation, which acts as a checkpoint to control that transcripts are favorably configured for transcriptional elongation. The PNUTS-PP1 complex mediates the release of RNA polymerase II from promoter-proximal region of genes by catalyzing dephosphorylation of proteins involved in transcription, such as AFF4, CDK9, MEPCE, INTS12, NCBP1, POLR2M/GDOWN1 and SUPT6H. The PNUTS-PP1 complex also regulates RNA polymerase II transcription termination by mediating dephosphorylation of SUPT5H in termination zones downstream of poly(A) sites, thereby promoting deceleration of RNA polymerase II transcription. PNUTS-PP1 complex is also involved in the response to replication stress by mediating dephosphorylation of POLR2A at 'Ser-5' of the CTD, promoting RNA polymerase II degradation. The PNUTS-PP1 complex also plays a role in the control of chromatin structure and cell cycle progression during the transition from mitosis into interphase. PNUTS-PP1 complex mediates dephosphorylation of MYC, promoting MYC stability by preventing MYC ubiquitination by the SCF(FBXW7) complex. In addition to acts as a substrate-recognition component, PPP1R10/PNUTS also acts as a nuclear targeting subunit for the PNUTS-PP1 complex. In some context, PPP1R10/PNUTS also acts as an inhibitor of protein phosphatase 1 (PP1) activity by preventing access to substrates, such as RB. The protein is Serine/threonine-protein phosphatase 1 regulatory subunit 10 (PPP1R10) of Pan troglodytes (Chimpanzee).